A 75-amino-acid polypeptide reads, in one-letter code: Small ribosomal subunit protein bS18 (75 aa).

It belongs to the bacterial ribosomal protein bS18 family. Part of the 30S ribosomal subunit. Forms a tight heterodimer with protein bS6.

Functionally, binds as a heterodimer with protein bS6 to the central domain of the 16S rRNA, where it helps stabilize the platform of the 30S subunit. The sequence is that of Small ribosomal subunit protein bS18 from Acinetobacter baumannii (strain AB307-0294).